The chain runs to 149 residues: Transcriptional repressor NrdR (149 aa).

A zinc finger lies at C3–C34. The 91-residue stretch at P49–E139 folds into the ATP-cone domain.

This sequence belongs to the NrdR family. The cofactor is Zn(2+).

Its function is as follows. Negatively regulates transcription of bacterial ribonucleotide reductase nrd genes and operons by binding to NrdR-boxes. The chain is Transcriptional repressor NrdR from Sodalis glossinidius (strain morsitans).